Consider the following 662-residue polypeptide: UvrABC system protein B (662 aa).

The Helicase ATP-binding domain maps to 31 to 188 (DNIEGGEKAQ…NDLVDIQFER (158 aa)). ATP is bound at residue 44–51 (GATGTGKT). The short motif at 97–120 (YYDYYQPEAYVPSSDTYIEKDSSV) is the Beta-hairpin element. The Helicase C-terminal domain occupies 435-601 (QIDDLLGEIN…TIKKEIRDLI (167 aa)). A UVR domain is found at 626–661 (KELVKKLEKQMQEAVEVLDFELAAQIRDMMLEVKAL).

The protein belongs to the UvrB family. In terms of assembly, forms a heterotetramer with UvrA during the search for lesions. Interacts with UvrC in an incision complex.

Its subcellular location is the cytoplasm. The UvrABC repair system catalyzes the recognition and processing of DNA lesions. A damage recognition complex composed of 2 UvrA and 2 UvrB subunits scans DNA for abnormalities. Upon binding of the UvrA(2)B(2) complex to a putative damaged site, the DNA wraps around one UvrB monomer. DNA wrap is dependent on ATP binding by UvrB and probably causes local melting of the DNA helix, facilitating insertion of UvrB beta-hairpin between the DNA strands. Then UvrB probes one DNA strand for the presence of a lesion. If a lesion is found the UvrA subunits dissociate and the UvrB-DNA preincision complex is formed. This complex is subsequently bound by UvrC and the second UvrB is released. If no lesion is found, the DNA wraps around the other UvrB subunit that will check the other stand for damage. This chain is UvrABC system protein B, found in Streptococcus pneumoniae (strain ATCC 700669 / Spain 23F-1).